We begin with the raw amino-acid sequence, 268 residues long: MNAEGGNLHREFEITWGDGRARIHNNGGLLTLSLDRASGSGFRSKNEYLFGRIEIQIKLVAGNSAGTVATYYLSSEGPTHDEIDFEFLGNSSGEPYTLHTNVFSQGKGNREQQFFLWFDPTMDFHTYTILWNPQRIIFYVDETPIREFKNLERHGIPFPRSQAMRVYSSMWNADDWATRGGLVKTDWTKAPFTASYRSYKADACVWSGEASSCGSQDSNPSDKWWMTEELNATRMKRLRWVQKKYMVYNYCVDKMRFPEGLAPECNIS.

The region spanning 1-196 (MNAEGGNLHR…WTKAPFTASY (196 aa)) is the GH16 domain. The Nucleophile role is filled by Glu-82. Residue Glu-86 is the Proton donor of the active site. Glu-86 is a xyloglucan binding site. Asn-90 carries N-linked (GlcNAc...) asparagine glycosylation. Xyloglucan contacts are provided by residues 99–101 (HTN), 109–111 (NRE), 175–176 (DW), and Gly-180. 2 disulfides stabilise this stretch: Cys-204–Cys-213 and Cys-251–Cys-265. Position 256 (Arg-256) interacts with xyloglucan.

Belongs to the glycosyl hydrolase 16 family. XTH group 2 subfamily. In terms of processing, contains at least one intrachain disulfide bond essential for its enzymatic activity. As to expression, expressed at a very high level in flowers and stems (picked at anthesis), and at a lower level in ripe leaves and fruits.

The protein localises to the cytoplasm. The enzyme catalyses breaks a beta-(1-&gt;4) bond in the backbone of a xyloglucan and transfers the xyloglucanyl segment on to O-4 of the non-reducing terminal glucose residue of an acceptor, which can be a xyloglucan or an oligosaccharide of xyloglucan.. Catalyzes xyloglucan endotransglycosylation (XET). Cleaves and religates xyloglucan polymers. Does not catalyze xyloglucan endohydrolysis (XEH). Probably involved in cell wall assembly and synthesis in fast growing tissues and in the maintenance of firmness in mature fruits. The chain is Xyloglucan endotransglucosylase protein 7 from Diospyros kaki (Kaki persimmon).